A 329-amino-acid chain; its full sequence is Galactosylgalactosylxylosylprotein 3-beta-glucuronosyltransferase 2 (329 aa).

The Cytoplasmic portion of the chain corresponds to 1 to 2; that stretch reads MK. The helical; Signal-anchor for type II membrane protein transmembrane segment at 3 to 23 threads the bilayer; that stretch reads SALFSRFFILLPWILIVIIML. Topologically, residues 24–329 are lumenal; that stretch reads DVDTRRPAPP…YRLDTVKIEV (306 aa). The segment at 45–87 is disordered; the sequence is VGRGGARLPPRRGGPDSGPGRGWEKRNESRPHARPRPEPPLPT. The segment covering 66 to 81 has biased composition (basic and acidic residues); sequence GWEKRNESRPHARPRP. Asn71 carries N-linked (GlcNAc...) asparagine glycosylation. UDP-alpha-D-glucuronate contacts are provided by residues 93 to 95, Asp124, Arg161, Arg166, and 191 to 193; these read PTY and DDD. Asp193 serves as a coordination point for Mn(2+). The interaction with galactose moiety of substrate glycoprotein stretch occupies residues 240-249; the sequence is WRADRPFAID. Glu279 functions as the Proton donor/acceptor in the catalytic mechanism. An N-linked (GlcNAc...) asparagine glycan is attached at Asn298. A UDP-alpha-D-glucuronate-binding site is contributed by 306-308; it reads HTR.

It belongs to the glycosyltransferase 43 family. In terms of assembly, homodimer. Mn(2+) is required as a cofactor.

The protein localises to the golgi apparatus membrane. It carries out the reaction 3-O-(beta-D-galactosyl-(1-&gt;3)-beta-D-galactosyl-(1-&gt;4)-beta-D-xylosyl)-L-seryl-[protein] + UDP-alpha-D-glucuronate = 3-O-(beta-D-GlcA-(1-&gt;3)-beta-D-Gal-(1-&gt;3)-beta-D-Gal-(1-&gt;4)-beta-D-Xyl)-L-seryl-[protein] + UDP + H(+). The protein operates within protein modification; protein glycosylation. Involved in the biosynthesis of L2/HNK-1 carbohydrate epitope on both glycolipids and glycoproteins. This is Galactosylgalactosylxylosylprotein 3-beta-glucuronosyltransferase 2 (B3GAT2) from Canis lupus familiaris (Dog).